Reading from the N-terminus, the 274-residue chain is Prothoracicostatic peptide (274 aa).

The signal sequence occupies residues 1 to 19; the sequence is MRWCLFALWVFGVATVVTA. Positions 20–67 are excised as a propeptide; that stretch reads AEEPHHDAAPQTDNEVDLTEDDKRAWSSLHSGWAKRAWQDMSSAWGKR. Tryptophan 76 carries the post-translational modification Tryptophan amide. Positions 77-91 are excised as a propeptide; it reads GKRGWQDLNSAWGKR. Tryptophan 100 carries the post-translational modification Tryptophan amide. A propeptide spanning residues 101-136 is cleaved from the precursor; it reads GKRGWQDLNSAWGKRDDDEAMEKKSWQDLNSVWGKR. Tryptophan 145 carries the post-translational modification Tryptophan amide. Positions 146–148 are excised as a propeptide; it reads GKR. A Tryptophan amide modification is found at tryptophan 157. The propeptide occupies 158 to 172; sequence GKRGWNDISSVWGKR. Tryptophan 181 is modified (tryptophan amide). The propeptide occupies 182–274; the sequence is GKRAWQDMSS…NEHSATTNEA (93 aa).

It is found in the secreted. In terms of biological role, inhibits ecdysteroid biosynthesis in the prothoracic gland of fifth instar larvae, with maximum inhibition during the spinning stage. When administered to day 8 fifth instar larvae it produces a significant delay in the commencement spinning behavior. The chain is Prothoracicostatic peptide from Bombyx mori (Silk moth).